We begin with the raw amino-acid sequence, 176 residues long: N-alpha-acetyltransferase NAT5 (176 aa).

Positions 14-176 constitute an N-acetyltransferase domain; the sequence is NNLGMLTKLA…DAILLKKHIS (163 aa).

The protein belongs to the acetyltransferase family. As to quaternary structure, component of the N-terminal acetyltransferase A (NatA) complex, which is composed of ARD1, NAT1 and NAT5.

The protein resides in the cytoplasm. The catalysed reaction is N-terminal L-methionyl-L-alanyl-[protein] + acetyl-CoA = N-terminal N(alpha)-acetyl-L-methionyl-L-alanyl-[protein] + CoA + H(+). It carries out the reaction N-terminal L-methionyl-L-seryl-[protein] + acetyl-CoA = N-terminal N(alpha)-acetyl-L-methionyl-L-seryl-[protein] + CoA + H(+). It catalyses the reaction N-terminal L-methionyl-L-valyl-[protein] + acetyl-CoA = N-terminal N(alpha)-acetyl-L-methionyl-L-valyl-[protein] + CoA + H(+). The enzyme catalyses N-terminal L-methionyl-L-threonyl-[protein] + acetyl-CoA = N-terminal N(alpha)-acetyl-L-methionyl-L-threonyl-[protein] + CoA + H(+). The catalysed reaction is N-terminal L-methionyl-L-lysyl-[protein] + acetyl-CoA = N-terminal N(alpha)-acetyl-L-methionyl-L-lysyl-[protein] + CoA + H(+). It carries out the reaction N-terminal L-methionyl-L-leucyl-[protein] + acetyl-CoA = N-terminal N(alpha)-acetyl-L-methionyl-L-leucyl-[protein] + CoA + H(+). It catalyses the reaction N-terminal L-methionyl-L-phenylalanyl-[protein] + acetyl-CoA = N-terminal N(alpha)-acetyl-L-methionyl-L-phenylalanyl-[protein] + CoA + H(+). The enzyme catalyses N-terminal L-methionyl-L-tyrosyl-[protein] + acetyl-CoA = N-terminal N(alpha)-acetyl-L-methionyl-L-tyrosyl-[protein] + CoA + H(+). Functionally, N-alpha-acetyltransferase that acetylates the N-terminus of proteins that retain their initiating methionine. Has a broad substrate specificity: able to acetylate the initiator methionine of most peptides. Non-essential component of the NatA N-terminal acetyltransferase. The polypeptide is N-alpha-acetyltransferase NAT5 (Saccharomyces cerevisiae (strain ATCC 204508 / S288c) (Baker's yeast)).